A 338-amino-acid polypeptide reads, in one-letter code: Anthranilate phosphoribosyltransferase (338 aa).

Residues glycine 81, 84-85 (GD), threonine 89, 91-94 (NIST), 109-117 (KHGNRAVSS), and serine 121 contribute to the 5-phospho-alpha-D-ribose 1-diphosphate site. Glycine 81 is an anthranilate binding site. Serine 93 contributes to the Mg(2+) binding site. Asparagine 112 is a binding site for anthranilate. Residue arginine 167 participates in anthranilate binding. Residues aspartate 226 and glutamate 227 each contribute to the Mg(2+) site.

The protein belongs to the anthranilate phosphoribosyltransferase family. Homodimer. Mg(2+) is required as a cofactor.

The catalysed reaction is N-(5-phospho-beta-D-ribosyl)anthranilate + diphosphate = 5-phospho-alpha-D-ribose 1-diphosphate + anthranilate. The protein operates within amino-acid biosynthesis; L-tryptophan biosynthesis; L-tryptophan from chorismate: step 2/5. Catalyzes the transfer of the phosphoribosyl group of 5-phosphorylribose-1-pyrophosphate (PRPP) to anthranilate to yield N-(5'-phosphoribosyl)-anthranilate (PRA). The sequence is that of Anthranilate phosphoribosyltransferase from Myxococcus xanthus (strain DK1622).